A 697-amino-acid polypeptide reads, in one-letter code: CENP-A multicopy suppressor protein 2 (697 aa).

The GATA-type; atypical zinc-finger motif lies at 351-378 (CQNCGTIKTANWRNATYMNITLMLCNAC). A disordered region spans residues 443–484 (PLNRLTSLDSTHSAPDPNHISKPSVVNQQKSRGGPRTAKLKN). Polar residues predominate over residues 445-455 (NRLTSLDSTHS).

Interacts with CENP-A.

The protein resides in the nucleus. It localises to the chromosome. It is found in the centromere. Its function is as follows. Required for proper chromosome segregation via regulation of CENP-A localization to the centromere. This is CENP-A multicopy suppressor protein 2 (ams2) from Schizosaccharomyces pombe (strain 972 / ATCC 24843) (Fission yeast).